The following is a 441-amino-acid chain: RNA-binding protein BRN1 (441 aa).

2 consecutive RRM domains span residues 18–99 and 106–186; these read VKLF…YADG and HKLF…WADT. Positions 258–273 are enriched in polar residues; it reads QPNQGNNNALQGTSPD. The segment at 258–282 is disordered; that stretch reads QPNQGNNNALQGTSPDSVPPRLARR. In terms of domain architecture, RRM 3 spans 349–427; it reads ANLFIYNIPR…KKLKVQLKRD (79 aa).

As to expression, highly expressed in stems and cauline leaves, and at lower levels in siliques, flowers, roots and rosette leaves.

Its subcellular location is the cytoplasm. Functionally, RNA-binding protein involved in the regulation of flowering time. Acts as a repressor of the activity of SOC1, a transcriptional activator of flowering time. Binds to the 3'-UTR of SOC1 mRNA in the cytoplasm and participates in SOC1 mRNA decay, mediated by the distal region of the SOC1 3'-UTR. Acts as a positive regulator of salicylic acid (SA)-mediated immunity. May act on SA signaling-related genes at a post-transcriptional level. This Arabidopsis thaliana (Mouse-ear cress) protein is RNA-binding protein BRN1.